The sequence spans 117 residues: Large ribosomal subunit protein bL20 (117 aa).

Belongs to the bacterial ribosomal protein bL20 family.

Functionally, binds directly to 23S ribosomal RNA and is necessary for the in vitro assembly process of the 50S ribosomal subunit. It is not involved in the protein synthesizing functions of that subunit. The chain is Large ribosomal subunit protein bL20 from Lawsonia intracellularis (strain PHE/MN1-00).